A 212-amino-acid chain; its full sequence is LVSDASNTKSYISRVAQDGSKSKEIYSGKPTLYLIVRTPGPVGAKIPSKVQKVLQLLRLNKINSGVFVKLTETVYPLLKLLSPYTVIXQPSLQTVRQLVQKRATVTVTHANDEEPRQVKLNDNNLVEEKLGDEGIICIEDIIHETSHLATTFKTVTHFLDPFELNKDVVGYGPLAKLRKLEKQEAEKQRKTSNSGSAPILEIDIDDFVAQQN.

It belongs to the universal ribosomal protein uL30 family.

It localises to the nucleus. The protein resides in the nucleolus. Its function is as follows. Involved in the biogenesis of the 60S ribosomal subunit. May act as a specificity factor that binds precursor rRNAs and tethers the enzymes that carry out the early 5' to 3' exonucleolytic reactions that generate the mature rRNAs. In Cyberlindnera jadinii (Torula yeast), this protein is Ribosome biogenesis protein RLP7 (RLP7).